Reading from the N-terminus, the 416-residue chain is UDP-N-acetylglucosamine 1-carboxyvinyltransferase (416 aa).

22-23 (KN) is a binding site for phosphoenolpyruvate. Arg-91 contacts UDP-N-acetyl-alpha-D-glucosamine. The active-site Proton donor is Cys-115. Cys-115 carries the 2-(S-cysteinyl)pyruvic acid O-phosphothioketal modification. UDP-N-acetyl-alpha-D-glucosamine-binding positions include 120–124 (RPVDL), Asp-303, and Ile-325.

It belongs to the EPSP synthase family. MurA subfamily.

Its subcellular location is the cytoplasm. The catalysed reaction is phosphoenolpyruvate + UDP-N-acetyl-alpha-D-glucosamine = UDP-N-acetyl-3-O-(1-carboxyvinyl)-alpha-D-glucosamine + phosphate. Its pathway is cell wall biogenesis; peptidoglycan biosynthesis. In terms of biological role, cell wall formation. Adds enolpyruvyl to UDP-N-acetylglucosamine. The sequence is that of UDP-N-acetylglucosamine 1-carboxyvinyltransferase from Oleidesulfovibrio alaskensis (strain ATCC BAA-1058 / DSM 17464 / G20) (Desulfovibrio alaskensis).